We begin with the raw amino-acid sequence, 284 residues long: Cell division protein DivIB (284 aa).

The disordered stretch occupies residues 1 to 21 (MFGKRKDSKNKAMRDNEELTP). Residues 1 to 63 (MFGKRKDSKN…GLRKRRLQKR (63 aa)) lie on the Cytoplasmic side of the membrane. The helical transmembrane segment at 64–84 (VITLASIFGISAIISLYAILP) threads the bilayer. The Extracellular portion of the chain corresponds to 85–284 (VSRVSNIEIE…VGAYAYPYBK (200 aa)). Residues 86–156 (SRVSNIEIEG…NVVKFKVTEY (71 aa)) enclose the POTRA domain.

The protein belongs to the FtsQ/DivIB family. DivIB subfamily.

The protein localises to the cell membrane. Functionally, cell division protein that may be involved in stabilizing or promoting the assembly of the division complex. This is Cell division protein DivIB from Ligilactobacillus salivarius (strain CECT 5713) (Lactobacillus salivarius).